Here is a 490-residue protein sequence, read N- to C-terminus: ATP synthase subunit alpha 1 (490 aa).

This sequence belongs to the ATPase alpha/beta chains family. In terms of assembly, F-type ATPases have 2 components, CF(1) - the catalytic core - and CF(0) - the membrane proton channel. CF(1) has five subunits: alpha(3), beta(3), gamma(1), delta(1), epsilon(1). CF(0) has three main subunits: a(1), b(2) and c(9-12). The alpha and beta chains form an alternating ring which encloses part of the gamma chain. CF(1) is attached to CF(0) by a central stalk formed by the gamma and epsilon chains, while a peripheral stalk is formed by the delta and b chains.

It localises to the cell inner membrane. The enzyme catalyses ATP + H2O + 4 H(+)(in) = ADP + phosphate + 5 H(+)(out). Functionally, produces ATP from ADP in the presence of a proton gradient across the membrane. The alpha chain is a regulatory subunit. This Legionella pneumophila (strain Paris) protein is ATP synthase subunit alpha 1.